The primary structure comprises 315 residues: Beta-ketoacyl-[acyl-carrier-protein] synthase III 2 (315 aa).

Residues cysteine 113 and histidine 241 contribute to the active site. The segment at 242 to 246 (QANLR) is ACP-binding. Asparagine 271 is an active-site residue.

It belongs to the thiolase-like superfamily. FabH family. As to quaternary structure, homodimer.

It localises to the cytoplasm. The catalysed reaction is malonyl-[ACP] + acetyl-CoA + H(+) = 3-oxobutanoyl-[ACP] + CO2 + CoA. The protein operates within lipid metabolism; fatty acid biosynthesis. In terms of biological role, catalyzes the condensation reaction of fatty acid synthesis by the addition to an acyl acceptor of two carbons from malonyl-ACP. Catalyzes the first condensation reaction which initiates fatty acid synthesis and may therefore play a role in governing the total rate of fatty acid production. Possesses both acetoacetyl-ACP synthase and acetyl transacylase activities. Its substrate specificity determines the biosynthesis of branched-chain and/or straight-chain of fatty acids. This chain is Beta-ketoacyl-[acyl-carrier-protein] synthase III 2, found in Streptomyces avermitilis (strain ATCC 31267 / DSM 46492 / JCM 5070 / NBRC 14893 / NCIMB 12804 / NRRL 8165 / MA-4680).